Here is a 491-residue protein sequence, read N- to C-terminus: Probable glycine dehydrogenase (decarboxylating) subunit 2 (491 aa).

Residue Lys273 is modified to N6-(pyridoxal phosphate)lysine.

This sequence belongs to the GcvP family. C-terminal subunit subfamily. The glycine cleavage system is composed of four proteins: P, T, L and H. In this organism, the P 'protein' is a heterodimer of two subunits. Pyridoxal 5'-phosphate is required as a cofactor.

It catalyses the reaction N(6)-[(R)-lipoyl]-L-lysyl-[glycine-cleavage complex H protein] + glycine + H(+) = N(6)-[(R)-S(8)-aminomethyldihydrolipoyl]-L-lysyl-[glycine-cleavage complex H protein] + CO2. In terms of biological role, the glycine cleavage system catalyzes the degradation of glycine. The P protein binds the alpha-amino group of glycine through its pyridoxal phosphate cofactor; CO(2) is released and the remaining methylamine moiety is then transferred to the lipoamide cofactor of the H protein. In Bacillus velezensis (strain DSM 23117 / BGSC 10A6 / LMG 26770 / FZB42) (Bacillus amyloliquefaciens subsp. plantarum), this protein is Probable glycine dehydrogenase (decarboxylating) subunit 2.